The primary structure comprises 156 residues: MAKTFKFIFYFWGAFVLVFALDQWVKSLTLAGFRWQSEYLDLTYALNTGVAFSMLSFLEHNLKYLHLALIGVLFIYLFWQRTLLKTHSIAFGMMLGAGVSNLLDRFIHGGVVDMFFWHKWFNFAIFNVADVMINISVALILIQEIFKKRKKDDRMD.

The next 3 helical transmembrane spans lie at 5 to 25 (FKFI…DQWV), 64 to 84 (YLHL…RTLL), and 89 to 109 (IAFG…FIHG). Active-site residues include Asp-113 and Asp-130. The helical transmembrane segment at 122–142 (NFAIFNVADVMINISVALILI) threads the bilayer.

Belongs to the peptidase A8 family.

The protein resides in the cell inner membrane. It catalyses the reaction Release of signal peptides from bacterial membrane prolipoproteins. Hydrolyzes -Xaa-Yaa-Zaa-|-(S,diacylglyceryl)Cys-, in which Xaa is hydrophobic (preferably Leu), and Yaa (Ala or Ser) and Zaa (Gly or Ala) have small, neutral side chains.. The protein operates within protein modification; lipoprotein biosynthesis (signal peptide cleavage). This protein specifically catalyzes the removal of signal peptides from prolipoproteins. This is Lipoprotein signal peptidase from Campylobacter jejuni subsp. jejuni serotype O:2 (strain ATCC 700819 / NCTC 11168).